Here is a 67-residue protein sequence, read N- to C-terminus: Large ribosomal subunit protein bL28 (67 aa).

This sequence belongs to the bacterial ribosomal protein bL28 family.

This chain is Large ribosomal subunit protein bL28, found in Nitratiruptor sp. (strain SB155-2).